A 1040-amino-acid chain; its full sequence is Multidrug resistance protein MdtB (1040 aa).

Transmembrane regions (helical) follow at residues 16–36 (FIMR…AGII), 347–367 (LMMA…NIPA), 369–389 (IIPG…MVFL), 396–416 (LTLM…IVVI), 440–460 (IGFT…PLLF), 472–492 (FAIT…TLTP), 537–557 (WLTL…WVFI), 863–883 (LGST…VLGI), 888–908 (FIHP…ALLA), 911–931 (IAGS…IGIV), 968–988 (ILMT…STGV), and 998–1018 (IGMV…TPVI).

Belongs to the resistance-nodulation-cell division (RND) (TC 2.A.6) family. MdtB subfamily. As to quaternary structure, part of a tripartite efflux system composed of MdtA, MdtB and MdtC. MdtB forms a heteromultimer with MdtC.

It is found in the cell inner membrane. The MdtABC tripartite complex confers resistance against novobiocin and deoxycholate. The chain is Multidrug resistance protein MdtB from Escherichia coli O157:H7 (strain EC4115 / EHEC).